The chain runs to 727 residues: Glucans biosynthesis glucosyltransferase H (727 aa).

Positions 17 to 41 (GSAMPNERPGPMEPQSLSQMPEGFP) are disordered. 6 helical membrane passes run 58 to 80 (FFVV…AVFS), 95 to 117 (FAIN…LLLL), 407 to 429 (GIMA…MLAL), 457 to 479 (ALRL…VLLL), 499 to 521 (VLFE…CGAV), and 572 to 594 (LLAW…AWTG).

This sequence belongs to the glycosyltransferase 2 family. OpgH subfamily.

It is found in the cell inner membrane. The protein operates within glycan metabolism; osmoregulated periplasmic glucan (OPG) biosynthesis. Functionally, involved in the biosynthesis of osmoregulated periplasmic glucans (OPGs). The polypeptide is Glucans biosynthesis glucosyltransferase H (Shewanella oneidensis (strain ATCC 700550 / JCM 31522 / CIP 106686 / LMG 19005 / NCIMB 14063 / MR-1)).